Reading from the N-terminus, the 252-residue chain is Geranylgeranylglyceryl phosphate synthase (252 aa).

The Mg(2+) site is built by aspartate 27 and serine 56. Sn-glycerol 1-phosphate contacts are provided by residues 175–181 (YLEAGSG), 206–207 (GG), and 228–229 (GT).

It belongs to the GGGP/HepGP synthase family. Group II subfamily. The cofactor is Mg(2+).

The protein resides in the cytoplasm. The catalysed reaction is sn-glycerol 1-phosphate + (2E,6E,10E)-geranylgeranyl diphosphate = sn-3-O-(geranylgeranyl)glycerol 1-phosphate + diphosphate. Its pathway is membrane lipid metabolism; glycerophospholipid metabolism. In terms of biological role, prenyltransferase that catalyzes the transfer of the geranylgeranyl moiety of geranylgeranyl diphosphate (GGPP) to the C3 hydroxyl of sn-glycerol-1-phosphate (G1P). This reaction is the first ether-bond-formation step in the biosynthesis of archaeal membrane lipids. The protein is Geranylgeranylglyceryl phosphate synthase of Pyrococcus abyssi (strain GE5 / Orsay).